Consider the following 447-residue polypeptide: Probable glycine dehydrogenase (decarboxylating) subunit 1 (447 aa).

This sequence belongs to the GcvP family. N-terminal subunit subfamily. As to quaternary structure, the glycine cleavage system is composed of four proteins: P, T, L and H. In this organism, the P 'protein' is a heterodimer of two subunits.

The enzyme catalyses N(6)-[(R)-lipoyl]-L-lysyl-[glycine-cleavage complex H protein] + glycine + H(+) = N(6)-[(R)-S(8)-aminomethyldihydrolipoyl]-L-lysyl-[glycine-cleavage complex H protein] + CO2. Functionally, the glycine cleavage system catalyzes the degradation of glycine. The P protein binds the alpha-amino group of glycine through its pyridoxal phosphate cofactor; CO(2) is released and the remaining methylamine moiety is then transferred to the lipoamide cofactor of the H protein. The protein is Probable glycine dehydrogenase (decarboxylating) subunit 1 of Bacillus anthracis (strain A0248).